A 137-amino-acid polypeptide reads, in one-letter code: Large ribosomal subunit protein uL16 (137 aa).

The protein belongs to the universal ribosomal protein uL16 family. Part of the 50S ribosomal subunit.

Functionally, binds 23S rRNA and is also seen to make contacts with the A and possibly P site tRNAs. The polypeptide is Large ribosomal subunit protein uL16 (Beijerinckia indica subsp. indica (strain ATCC 9039 / DSM 1715 / NCIMB 8712)).